A 224-amino-acid polypeptide reads, in one-letter code: MSIRDWPASERPREKLLDQGAAALSDAELLAIFLRTGVAGKSAVDLARYLLAEFGSLRALLEADLDQFSAHLGLGPAKFAQLQAVLEMGRRHLAERLRRDSALESPQAVRDYLKARLRHEPHELFGCLFLDAKHRVLAFEVLFHGTIDGASVYPRQVVKRALAQNAAAVILTHNHPSGVAEPSQADRQLTQRLKDALALIDVRVLDHFIVGDGEPLSMAEYGWM.

One can recognise an MPN domain in the interval 102 to 224; it reads ALESPQAVRD…PLSMAEYGWM (123 aa). The Zn(2+) site is built by H173, H175, and D186. Positions 173 to 186 match the JAMM motif motif; sequence HNHPSGVAEPSQAD.

The protein belongs to the UPF0758 family.

This is UPF0758 protein PST_0473 from Stutzerimonas stutzeri (strain A1501) (Pseudomonas stutzeri).